The chain runs to 1050 residues: FHIP family protein GE18198 (1050 aa).

Phosphoserine occurs at positions 498 and 805. Disordered stretches follow at residues lysine 800–arginine 827, threonine 865–serine 888, threonine 911–asparagine 954, and serine 968–alanine 995. The segment covering histidine 808–leucine 826 has biased composition (polar residues). Low complexity predominate over residues serine 872 to serine 888. A compositionally biased stretch (polar residues) spans histidine 918–glutamine 935. Positions threonine 941–asparagine 954 are enriched in low complexity. The segment covering serine 968–threonine 977 has biased composition (polar residues).

It belongs to the FHIP family.

The chain is FHIP family protein GE18198 from Drosophila yakuba (Fruit fly).